We begin with the raw amino-acid sequence, 158 residues long: NAD(P)H-quinone oxidoreductase subunit J, chloroplastic (158 aa).

Belongs to the complex I 30 kDa subunit family. NDH is composed of at least 16 different subunits, 5 of which are encoded in the nucleus.

It localises to the plastid. It is found in the chloroplast thylakoid membrane. It catalyses the reaction a plastoquinone + NADH + (n+1) H(+)(in) = a plastoquinol + NAD(+) + n H(+)(out). It carries out the reaction a plastoquinone + NADPH + (n+1) H(+)(in) = a plastoquinol + NADP(+) + n H(+)(out). NDH shuttles electrons from NAD(P)H:plastoquinone, via FMN and iron-sulfur (Fe-S) centers, to quinones in the photosynthetic chain and possibly in a chloroplast respiratory chain. The immediate electron acceptor for the enzyme in this species is believed to be plastoquinone. Couples the redox reaction to proton translocation, and thus conserves the redox energy in a proton gradient. This chain is NAD(P)H-quinone oxidoreductase subunit J, chloroplastic, found in Piper cenocladum (Ant piper).